Reading from the N-terminus, the 348-residue chain is uncharacterized protein (348 aa).

This is an uncharacterized protein from Geobacillus kaustophilus (strain HTA426).